A 545-amino-acid polypeptide reads, in one-letter code: Propane 2-monooxygenase, hydroxylase component large subunit (545 aa).

Fe cation contacts are provided by glutamate 97, glutamate 127, histidine 130, glutamate 192, glutamate 226, and histidine 229.

This sequence belongs to the TmoA/XamoA family. As to quaternary structure, the propane 2-monooxygenase multicomponent enzyme system is composed of an electron transfer component and a monooxygenase component interacting with the effector protein PrmD. The electron transfer component is composed of a reductase (PrmB), and the monooxygenase component is formed by a large subunit (PrmA) and a small subunit (PrmC). Probably requires the presence of the chaperonin-like protein PrmG to ensure a productive folding, resulting of a soluble PrmA, which leads to the active form of PrmABCD. Fe(2+) serves as cofactor.

The enzyme catalyses propane + NADH + O2 + H(+) = propan-2-ol + NAD(+) + H2O. It catalyses the reaction phenol + NADH + O2 + H(+) = hydroquinone + NAD(+) + H2O. Functionally, component of the propane 2-monooxygenase multicomponent enzyme system which is involved in the degradation of propane via the O2-dependent hydroxylation of propane. Under acetone induction, also able to catalyze the oxidation of phenol to yield hydroquinone. In Gordonia sp. (strain TY-5), this protein is Propane 2-monooxygenase, hydroxylase component large subunit.